A 161-amino-acid polypeptide reads, in one-letter code: MVKKKSKQKAGSNTIALNKKARHEYFIDDEIEAGMELQGWEVKALRQGKANIAESYVFMRDGEAFVSGMTITPLNQASTHVVANPTRVRKLLMSRRELDNLLGRINREGMTLAALSLYWSRSWVKIKIGVAKGKKLHDKRTDLKEKDWAREKARVMKSSLR.

The protein belongs to the SmpB family.

Its subcellular location is the cytoplasm. Required for rescue of stalled ribosomes mediated by trans-translation. Binds to transfer-messenger RNA (tmRNA), required for stable association of tmRNA with ribosomes. tmRNA and SmpB together mimic tRNA shape, replacing the anticodon stem-loop with SmpB. tmRNA is encoded by the ssrA gene; the 2 termini fold to resemble tRNA(Ala) and it encodes a 'tag peptide', a short internal open reading frame. During trans-translation Ala-aminoacylated tmRNA acts like a tRNA, entering the A-site of stalled ribosomes, displacing the stalled mRNA. The ribosome then switches to translate the ORF on the tmRNA; the nascent peptide is terminated with the 'tag peptide' encoded by the tmRNA and targeted for degradation. The ribosome is freed to recommence translation, which seems to be the essential function of trans-translation. The chain is SsrA-binding protein from Vibrio campbellii (strain ATCC BAA-1116).